We begin with the raw amino-acid sequence, 139 residues long: Large ribosomal subunit protein uL16 (139 aa).

Belongs to the universal ribosomal protein uL16 family. As to quaternary structure, part of the 50S ribosomal subunit.

Binds 23S rRNA and is also seen to make contacts with the A and possibly P site tRNAs. In Chlorobium luteolum (strain DSM 273 / BCRC 81028 / 2530) (Pelodictyon luteolum), this protein is Large ribosomal subunit protein uL16.